Here is a 155-residue protein sequence, read N- to C-terminus: Small ribosomal subunit protein mS86 (155 aa).

The transit peptide at 1–27 (MHYMGLFSRAGNIFRQPRALQASNAML) directs the protein to the mitochondrion. The region spanning 36-114 (SKIFVGGLSP…RIIGVHPADS (79 aa)) is the RRM domain.

This sequence belongs to the GR-RBP family. In terms of assembly, component of the mitochondrial ribosome small subunit.

The protein localises to the mitochondrion. Possibly has a role in RNA transcription or processing during stress. The sequence is that of Small ribosomal subunit protein mS86 (RBG6) from Arabidopsis thaliana (Mouse-ear cress).